A 528-amino-acid polypeptide reads, in one-letter code: Atypical kinase COQ8B, mitochondrial (528 aa).

The chain crosses the membrane as a helical span at residues 93 to 109; it reads LASFGGLAVGLGLGALA. Positions 151–154 match the KxGQ motif motif; that stretch reads KIGQ. The Protein kinase domain occupies 187 to 419; that stretch reads MMKVLEEELG…DRVLQKSQDL (233 aa). The AAAS motif motif lies at 212-215; the sequence is AAAS. ATP-binding positions include S215, K233, and 320–323; that span reads MELA. D363 acts as the Proton acceptor in catalysis. N368 and D382 together coordinate ATP.

It belongs to the protein kinase superfamily. ADCK protein kinase family. As to quaternary structure, homodimer; homodimerizes via its transmembrane region. Interacts with COQ6 and COQ7. Interacts with the multi-subunit COQ enzyme complex, composed of at least COQ3, COQ4, COQ5, COQ6, COQ7 and COQ9. In terms of tissue distribution, in the kidney, expressed in glomeruli, predominantly in podocyte foot precesses, as well as in proximal tubules and collecting ducts (at protein level).

The protein localises to the mitochondrion membrane. Its subcellular location is the cytoplasm. The protein resides in the cytosol. It localises to the cell membrane. It functions in the pathway cofactor biosynthesis; ubiquinone biosynthesis. Its function is as follows. Atypical kinase involved in the biosynthesis of coenzyme Q, also named ubiquinone, an essential lipid-soluble electron transporter for aerobic cellular respiration. Its substrate specificity is still unclear: may act as a protein kinase that mediates phosphorylation of COQ3. According to other reports, acts as a small molecule kinase, possibly a lipid kinase that phosphorylates a prenyl lipid in the ubiquinone biosynthesis pathway, as suggested by its ability to bind coenzyme Q lipid intermediates. However, the small molecule kinase activity was not confirmed by another publication. Required for podocyte migration. This is Atypical kinase COQ8B, mitochondrial from Rattus norvegicus (Rat).